The primary structure comprises 163 residues: MSNPEPDDSNNRIVAVTLDEESIGRSGPDIEHERAIAIYDLVEKNLFAPEGAGEGPFTLHIGITGNRLMFDIRREDGAPVITHLLSLTPFRRIVKDYFMICDSYYQAIRTATPDKIEAIDMGRRGIHDEGSRTLQERLAGKVRIDFETARRLFTLISVLHWKG.

The protein belongs to the UPF0262 family.

The sequence is that of UPF0262 protein RPA4530 from Rhodopseudomonas palustris (strain ATCC BAA-98 / CGA009).